The following is a 259-amino-acid chain: Peroxisomal membrane protein 11B (259 aa).

Lys43 carries the post-translational modification N6-acetyllysine. Residues 157–176 (LKGSGGGVPGGSETGGLGGP) form a disordered region. The span at 159 to 176 (GSGGGVPGGSETGGLGGP) shows a compositional bias: gly residues. An interaction with PEX19, PEX11G and FIS1 and peroxisome targeting region spans residues 211–259 (VVRNACDLFIPLDKLGLWRCGPGIVGLCGLVSSILSILTLIYPWLRLKP). A helical membrane pass occupies residues 233–255 (GIVGLCGLVSSILSILTLIYPWL).

It belongs to the peroxin-11 family. As to quaternary structure, homodimer. Heterodimer with PEX11G. Interacts with PEX19. Interacts with FIS1.

The protein resides in the peroxisome membrane. Its function is as follows. Involved in peroxisomal proliferation. May regulate peroxisome division by recruiting the dynamin-related GTPase DNM1L to the peroxisomal membrane. Promotes membrane protrusion and elongation on the peroxisomal surface. The protein is Peroxisomal membrane protein 11B (PEX11B) of Homo sapiens (Human).